The sequence spans 446 residues: Baeyer-Villiger monooxygenase dmxR6 (446 aa).

The protein belongs to the AflY oxidoreductase family.

It functions in the pathway secondary metabolite biosynthesis. Functionally, baeyer-Villiger monooxygenase; part of the gene cluster that mediates the biosynthesis of the dimeric xanthones cryptosporioptides. The pathway begins with the synthesis of atrochrysone thioester by the polyketide synthase dmx-nrPKS. The atrochrysone carboxyl ACP thioesterase dmxR1 then breaks the thioester bond and releases the atrochrysone carboxylic acid from dmx-nrPKS. Atrochrysone carboxylic acid is decarboxylated by the decarboxylase dmxR15, and oxidized by the anthrone oxygenase dmxR16 to yield emodin. Emodin is then reduced to emodin hydroquinone by the oxidoreductase dmxR7. A-ring reduction by the short chain dehydrogenase dmxR18, dehydration by the scytalone dehydratase-like protein dmxR17 and probable spontaneous re-oxidation, results in overall deoxygenation to chrysophanol. Baeyer-Villiger oxidation by the Baeyer-Villiger monooxygenase (BVMO) dmxR6 then yields monodictylactone in equilibrium with monodictyphenone. In the case of the cryptosporioptides biosynthesis, monodictylactone is reduced at C-12 to an alcohol (by the short chain dehydrogenases dmxR12 or dmxR8) and hydroxylated at C-5 by dmxR9, yielding the electron-rich aromatic which could eliminate H(2)O to form the ortho-quinonemethide, followed by tautomerisation to paraquinone and complete the formal reduction to produce the 10-methylgroup. Conjugate addition of C-4a-OH to the resulting paraquinone by the monooxygenase dmxR10 then gives cyclohexadienone, which is then reduced at C-5 by the short chain dehydrogenase dmxR3 to give the dihydroxanthone. The 6,7-epoxide in the cryptosporioptides could be introduced by the cytochrome P450 monooxygenase dmxL3. The highly reducing PKS dmxL2 manufactures butyrate, which is further carboxylated by dmxL1 to form ethylmalonate. It is not yet clear whether the carboxylation occurs while the butyrate is attached to the ACP of dmxL2, but this unusual fungal metabolite could then be esterified to O-5 by the O-acetyltransferase dmxR13. Finally, dimerization performed by dmxR5 gives the observed dimers cryptosporioptides A, B and C as the final products of the pathway. The chain is Baeyer-Villiger monooxygenase dmxR6 from Cryptosporiopsis sp. (strain 8999).